The following is a 413-amino-acid chain: Hibernation-specific plasma protein HP-55 (413 aa).

The first 24 residues, 1-24, serve as a signal peptide directing secretion; the sequence is MPSSISWGLLLLAALSCLGPGSLA. Residue Gln25 is modified to Pyrrolidone carboxylic acid. N-linked (GlcNAc...) asparagine glycosylation is found at Asn65, Asn102, Asn165, and Asn266. Positions 368-387 are RCL; the sequence is GGTVLGAEAMLQAPIMKFDR.

The protein belongs to the serpin family. Plasma proteins HP-20, HP-25, HP-27 and HP-55 form a 140 kDa complex via disulfide bonds in the plasma. The N-terminus is blocked. As to expression, plasma; synthesized in the liver.

It localises to the secreted. In terms of biological role, protease inhibitor. The polypeptide is Hibernation-specific plasma protein HP-55 (Tamias sibiricus (Siberian chipmunk)).